Consider the following 194-residue polypeptide: MQGFFWKTWLVLAVCGTPASLAHRPLSYGEALELAVSVYNGKAGEASLYRLLEAVPQPEWDPSSEGSQQLNFTLKETACQVEEERSLEECGFQEDGVVLECTGYYFFGETPPVVVLSCVPVGGVEEEEEEEEEEQKAEAENDEEVEKEKGDEEKDQPKRVKRFKKFFKKVKKSVKKRLKKIFKKPMVIGVTIPF.

Residues 1 to 22 (MQGFFWKTWLVLAVCGTPASLA) form the signal peptide. Residues 23–164 (HRPLSYGEAL…DQPKRVKRFK (142 aa)) constitute a propeptide that is removed on maturation. Intrachain disulfides connect C79-C90 and C101-C118. Positions 125 to 145 (EEEEEEEEEEQKAEAENDEEV) are enriched in acidic residues. The tract at residues 125-156 (EEEEEEEEEEQKAEAENDEEVEKEKGDEEKDQ) is disordered. Positions 146–156 (EKEKGDEEKDQ) are enriched in basic and acidic residues.

The protein belongs to the cathelicidin family. As to expression, expressed by the venom gland.

It is found in the secreted. The protein localises to the target cell membrane. In terms of biological role, potent antimicrobial peptide against Gram-negative and Gram-positive bacteria. Adopts an amphipathic alpha helical conformation, that may allow to partition into the target membrane. Low hemolytic activities have been observed on mammalian cells. The protein is Cathelicidin-related peptide isoform 3 of Crotalus durissus cascavella (Northeastern Brazilian rattlesnake).